We begin with the raw amino-acid sequence, 737 residues long: Cilium assembly protein DZIP1L (737 aa).

The interaction with Rab8 stretch occupies residues 1-293; it reads MGFKGKYPQM…LKQSNEQFIQ (293 aa). Residues 98-132 are a coiled coil; sequence VTDLKEAHTTAQEEIATLRKSLSESNNEVVQLHKR. The segment at 144 to 167 adopts a C2H2-type zinc-finger fold; that stretch reads YPCHLCTKNFISNEALNVHIGRKH. Disordered regions lie at residues 167-187, 214-267, 415-548, 624-682, and 698-737; these read HRVASPPSLTSATGKEKDRDK, ERNI…KEQL, SEFL…RKDA, KSPL…VSRD, and IRGASKSSLSSRPVPLPRKRVMFNTTEDGKSFNDSDDNLK. Composition is skewed to basic and acidic residues over residues 244 to 266 and 415 to 438; these read EPKEKDEDSGEARQSEASERKEQ and SEFLKQKHDDDTYSIEEAPRKGSE. Polar residues predominate over residues 457 to 469; it reads SAGSSDSNPTYTK. A compositionally biased stretch (acidic residues) spans 492–510; it reads SQEETENEEERSLTEEEGT. Positions 665–677 are enriched in polar residues; sequence SSEQQTRSPSPQR. The segment covering 724-737 has biased composition (basic and acidic residues); the sequence is EDGKSFNDSDDNLK.

It belongs to the DZIP C2H2-type zinc-finger protein family. Component of a ciliary transition zone (TZ)-localized complex composed of DZIP1, Fam92 and Cby. Interacts directly with Cby. Interacts with Cep290 (via N-terminus). Interacts (via N-terminus) with Rab8. As to expression, in neurons of the second and third antennal segments, expressed at the tip of the dendrites.

It is found in the cytoplasm. Its subcellular location is the cytoskeleton. It localises to the microtubule organizing center. The protein resides in the centrosome. The protein localises to the centriole. It is found in the cilium basal body. Component of the DZIP1-Fam92-Cby complex which promotes ciliogenesis in sensory neurons and spermatocytes by acting downstream of Cep290 to initiate early ciliary membrane formation and thus transition zone (TZ) assembly. During spermatogenesis, also regulates distal elongation of the basal-body and their docking (anchoring) to the plasma membrane and as a consequence, regulates the initiation and proper elongation of axonemal microtubules. Within the complex, required to recruit or stabilize Rab8, Fam92 and Cby at the distal basal body of cilia to promote early ciliary membrane formation and initiate TZ assembly. Also acts with Fam92 to restrict Cep290 localization to the proximal part of the TZ. May also be involved in recruitment or stabilization of Mks1 at the TZ. The protein is Cilium assembly protein DZIP1L of Drosophila melanogaster (Fruit fly).